The chain runs to 194 residues: FMN-dependent NADH:quinone oxidoreductase (194 aa).

Residues Ser-10, 16–18 (SQS), 91–94 (MYNF), and 135–138 (TRGG) contribute to the FMN site.

This sequence belongs to the azoreductase type 1 family. Homodimer. It depends on FMN as a cofactor.

The catalysed reaction is 2 a quinone + NADH + H(+) = 2 a 1,4-benzosemiquinone + NAD(+). It catalyses the reaction N,N-dimethyl-1,4-phenylenediamine + anthranilate + 2 NAD(+) = 2-(4-dimethylaminophenyl)diazenylbenzoate + 2 NADH + 2 H(+). Functionally, quinone reductase that provides resistance to thiol-specific stress caused by electrophilic quinones. In terms of biological role, also exhibits azoreductase activity. Catalyzes the reductive cleavage of the azo bond in aromatic azo compounds to the corresponding amines. The polypeptide is FMN-dependent NADH:quinone oxidoreductase (Vibrio parahaemolyticus serotype O3:K6 (strain RIMD 2210633)).